A 402-amino-acid polypeptide reads, in one-letter code: NADH-quinone oxidoreductase subunit D 2 (402 aa).

It belongs to the complex I 49 kDa subunit family. In terms of assembly, NDH-1 is composed of 14 different subunits. Subunits NuoB, C, D, E, F, and G constitute the peripheral sector of the complex.

The protein resides in the cell inner membrane. It carries out the reaction a quinone + NADH + 5 H(+)(in) = a quinol + NAD(+) + 4 H(+)(out). In terms of biological role, NDH-1 shuttles electrons from NADH, via FMN and iron-sulfur (Fe-S) centers, to quinones in the respiratory chain. The immediate electron acceptor for the enzyme in this species is believed to be ubiquinone. Couples the redox reaction to proton translocation (for every two electrons transferred, four hydrogen ions are translocated across the cytoplasmic membrane), and thus conserves the redox energy in a proton gradient. The polypeptide is NADH-quinone oxidoreductase subunit D 2 (Nitrobacter hamburgensis (strain DSM 10229 / NCIMB 13809 / X14)).